The primary structure comprises 910 residues: Auxilin (910 aa).

3 consecutive repeat copies span residues 33–36, 37–40, and 41–44. The segment at 33–44 is 3 X 4 AA approximate tandem repeats; it reads NLKDNLKDTLKD. Positions 52-219 constitute a Phosphatase tensin-type domain; the sequence is SVTSYTKGDL…GYMCDLLADK (168 aa). At S109 the chain carries Phosphoserine. C161 (phosphocysteine intermediate) is an active-site residue. Residues 225 to 363 enclose the C2 tensin-type domain; the sequence is FKPLTIKSIT…FQVTLDVELQ (139 aa). The SH3-binding motif lies at 406 to 414; that stretch reads PIDIPPDNP. The tract at residues 448 to 772 is disordered; it reads QESEQSDDEL…RGKAAANLEG (325 aa). A phosphoserine mark is found at S450, S453, S560, and S567. A compositionally biased stretch (low complexity) spans 547–569; the sequence is PSGPTSTQSTPRRSATSTSASPT. Residues 596 to 626 show a composition bias toward polar residues; that stretch reads FLNTASASSDPFLQPTRSPSPTVHASSTPAV. The span at 651 to 666 shows a compositional bias: low complexity; that stretch reads SAATSPTGSSHGTPTH. Over residues 715–725 the composition is skewed to gly residues; the sequence is MGGGWQQGGGY. Polar residues predominate over residues 732–758; sequence SKPQSSMPHSSPQNRPNYNVSFSSMPG. Positions 846–910 constitute a J domain; it reads TKWKPVGMAD…FENQGQKPLY (65 aa).

Forms a complex composed of HSPA8, CLTC and DNAJC6. Interacts with HSPA8/HSC70 in an ATP-dependent manner; this interaction stimulates the HSPA8's ATPase activity. Interacts with CLTC; this interaction produces a local change in heavy-chain contacts, creating a detectable global distortion of the clathrin coat. Interacts with AP2A2. Interacts with DNM1(GTP-bound form); this interaction allows clathrin-coated vesicle (CCV) formation at the plasma membrane. The N-terminus is blocked. Post-translationally, phosphorylation at Ser-567 modulates its ability to bind CLTC and therefore the synaptic vesicle endocytosis (SVE). In terms of tissue distribution, brain.

It is found in the cytoplasmic vesicle. The protein resides in the clathrin-coated vesicle. In terms of biological role, may act as a protein phosphatase and/or a lipid phosphatase. Co-chaperone that recruits HSPA8/HSC70 to clathrin-coated vesicles (CCVs) and promotes the ATP-dependent dissociation of clathrin from CCVs and participates in clathrin-mediated endocytosis of synaptic vesicles and their recycling and also in intracellular trafficking. Firstly, binds tightly to the clathrin cages, at a ratio of one DNAJC6 per clathrin triskelion. The HSPA8:ATP complex then binds to the clathrin-auxilin cage, initially at a ratio of one HSPA8 per triskelion leading to ATP hydrolysis stimulation and causing a conformational change in the HSPA8. This cycle is repeated three times to drive to a complex containing the clathrin-auxilin cage associated to three HSPA8:ADP complex. The ATP hydrolysis of the third HSPA8:ATP complex leads to a concerted dismantling of the cage into component triskelia. Then, dissociates from the released triskelia and be recycled to initiate another cycle of HSPA8's recruitment. Also acts during the early steps of clathrin-coated vesicle (CCV) formation through its interaction with the GTP bound form of DNM1. The polypeptide is Auxilin (Bos taurus (Bovine)).